The chain runs to 88 residues: MAEEMKEHIYIIPLRDARRMPRWKRANGAIKDIRKYLAKHMKTEDVKLDKTINEKVWSRGAEKPPSKIRVRAMKMEDGQVQAELALES.

It belongs to the eukaryotic ribosomal protein eL31 family.

This chain is Large ribosomal subunit protein eL31, found in Methanoregula boonei (strain DSM 21154 / JCM 14090 / 6A8).